Here is a 287-residue protein sequence, read N- to C-terminus: uncharacterized protein (287 aa).

Transmembrane regions (helical) follow at residues 27 to 47, 66 to 86, 97 to 117, 135 to 155, 171 to 191, 205 to 225, and 254 to 274; these read LTFSVAAIGILFIFLIGFGVQ, LGTIAFVASLVSLILYFVTAF, WFWGLIIADVISYGITLGVLL, IVFAFLGAALVYGTVWGLSAL, IFIWAFFISIIASLLTFVLNF, LFPGLSLIVGGIFSLLSVYFV, and SALFFGAWLVSSFMNLVYFIL.

It localises to the cell membrane. This is an uncharacterized protein from Mycoplasma pneumoniae (strain ATCC 29342 / M129 / Subtype 1) (Mycoplasmoides pneumoniae).